The sequence spans 803 residues: Translation initiation factor IF-2 (803 aa).

Disordered stretches follow at residues 95–125 (PVVE…EKAE) and 138–178 (EVKE…EREE). Residues 111–121 (VPLTSDTTNLN) show a composition bias toward polar residues. Positions 138–155 (EVKEEAKKTPSEKKETPK) are enriched in basic and acidic residues. Over residues 156 to 167 (KGPRKETRRSRK) the composition is skewed to basic residues. A compositionally biased stretch (basic and acidic residues) spans 168–178 (PDKEDKWEREE). The tr-type G domain occupies 302–471 (PRAPVVTIMG…LLQAEVLELK (170 aa)). Residues 311 to 318 (GHVDHGKT) form a G1 region. 311–318 (GHVDHGKT) lines the GTP pocket. The segment at 336-340 (GITQH) is G2. A G3 region spans residues 357 to 360 (DTPG). Residues 357-361 (DTPGH) and 411-414 (NKID) contribute to the GTP site. The interval 411-414 (NKID) is G4. The tract at residues 447–449 (SAK) is G5.

This sequence belongs to the TRAFAC class translation factor GTPase superfamily. Classic translation factor GTPase family. IF-2 subfamily.

It is found in the cytoplasm. In terms of biological role, one of the essential components for the initiation of protein synthesis. Protects formylmethionyl-tRNA from spontaneous hydrolysis and promotes its binding to the 30S ribosomal subunits. Also involved in the hydrolysis of GTP during the formation of the 70S ribosomal complex. The protein is Translation initiation factor IF-2 of Coxiella burnetii (strain CbuK_Q154) (Coxiella burnetii (strain Q154)).